The following is a 269-amino-acid chain: Surfeit locus protein 4 (269 aa).

The next 6 helical transmembrane spans lie at 64–84, 92–112, 157–177, 179–199, 203–223, and 242–262; these read FLAS…CILV, YACF…SILW, MQLG…HFDM, FFYI…AIGF, LAAL…NAFW, and TMSV…GVSM. The short motif at 266-269 is the Di-lysine motif element; sequence KKEW.

It belongs to the SURF4 family.

Its subcellular location is the endoplasmic reticulum membrane. It is found in the endoplasmic reticulum-Golgi intermediate compartment membrane. The protein localises to the golgi apparatus membrane. Endoplasmic reticulum cargo receptor that mediates the export of lipoproteins by recruiting cargos into COPII vesicles to facilitate their secretion. Acts as a cargo receptor for lipoproteins bearing both APOB and APOA1, thereby regulating lipoprotein delivery and the maintenance of lipid homeostasis. This chain is Surfeit locus protein 4, found in Gallus gallus (Chicken).